A 94-amino-acid polypeptide reads, in one-letter code: Small ribosomal subunit protein uS19 (94 aa).

Belongs to the universal ribosomal protein uS19 family.

Protein S19 forms a complex with S13 that binds strongly to the 16S ribosomal RNA. This is Small ribosomal subunit protein uS19 from Nitrosomonas eutropha (strain DSM 101675 / C91 / Nm57).